A 374-amino-acid chain; its full sequence is Tryptophan--tRNA ligase (374 aa).

The short motif at 81 to 89 (PSGPVHIGH) is the 'HIGH' region element. Positions 258–262 (KMSAS) match the 'KMSKS' region motif.

This sequence belongs to the class-I aminoacyl-tRNA synthetase family.

It localises to the cytoplasm. It carries out the reaction tRNA(Trp) + L-tryptophan + ATP = L-tryptophyl-tRNA(Trp) + AMP + diphosphate + H(+). The chain is Tryptophan--tRNA ligase from Pyrobaculum calidifontis (strain DSM 21063 / JCM 11548 / VA1).